A 157-amino-acid chain; its full sequence is Small ribosomal subunit protein uS7 (157 aa).

This sequence belongs to the universal ribosomal protein uS7 family. As to quaternary structure, part of the 30S ribosomal subunit. Contacts proteins S9 and S11.

Its function is as follows. One of the primary rRNA binding proteins, it binds directly to 16S rRNA where it nucleates assembly of the head domain of the 30S subunit. Is located at the subunit interface close to the decoding center, probably blocks exit of the E-site tRNA. The sequence is that of Small ribosomal subunit protein uS7 from Borreliella burgdorferi (strain ATCC 35210 / DSM 4680 / CIP 102532 / B31) (Borrelia burgdorferi).